Consider the following 199-residue polypeptide: MKSVAGIVLAGGMSRRFGEPKALVSWQGYTFIERIVQVMQDVMQDIVVISHASIKERVAHLIEVPVIEDISFYKGEGPLAGIVSGMEHLEAEWYMISPCDTPNISSKWIKQITGQIDDEYEAIIPIVEGRKQPLLGAYHKNVKEKIYKLLDEEKRSMEQLLSHCNVKYVTGDEWNIEKTWFVNVNTKEEYAELLTCKKK.

GTP is bound by residues 9 to 11, lysine 21, aspartate 69, and aspartate 100; that span reads LAG. Aspartate 100 provides a ligand contact to Mg(2+).

This sequence belongs to the MobA family. Mg(2+) serves as cofactor.

The protein resides in the cytoplasm. The catalysed reaction is Mo-molybdopterin + GTP + H(+) = Mo-molybdopterin guanine dinucleotide + diphosphate. Its function is as follows. Transfers a GMP moiety from GTP to Mo-molybdopterin (Mo-MPT) cofactor (Moco or molybdenum cofactor) to form Mo-molybdopterin guanine dinucleotide (Mo-MGD) cofactor. The sequence is that of Probable molybdenum cofactor guanylyltransferase from Bacillus cytotoxicus (strain DSM 22905 / CIP 110041 / 391-98 / NVH 391-98).